The following is a 933-amino-acid chain: Valine--tRNA ligase (933 aa).

The segment at 1 to 24 (MIERVKTTKLSEASGLPKTYDPVG) is disordered. The 'HIGH' region motif lies at 57–67 (PNVTGSLHMGH). The 'KMSKS' region signature appears at 557 to 561 (KMSKS). ATP is bound at residue Lys560. Residues 866-932 (LIDIASLRSR…RLVKERLMGL (67 aa)) adopt a coiled-coil conformation.

Belongs to the class-I aminoacyl-tRNA synthetase family. ValS type 1 subfamily. As to quaternary structure, monomer.

It is found in the cytoplasm. It catalyses the reaction tRNA(Val) + L-valine + ATP = L-valyl-tRNA(Val) + AMP + diphosphate. Its function is as follows. Catalyzes the attachment of valine to tRNA(Val). As ValRS can inadvertently accommodate and process structurally similar amino acids such as threonine, to avoid such errors, it has a 'posttransfer' editing activity that hydrolyzes mischarged Thr-tRNA(Val) in a tRNA-dependent manner. This is Valine--tRNA ligase from Prochlorococcus marinus (strain NATL2A).